We begin with the raw amino-acid sequence, 185 residues long: Acireductone dioxygenase (185 aa).

The tract at residues Met-1 to Glu-23 is disordered. His-102, His-104, Glu-108, and His-146 together coordinate Fe(2+). Ni(2+) contacts are provided by His-102, His-104, Glu-108, and His-146.

It belongs to the acireductone dioxygenase (ARD) family. As to quaternary structure, monomer. Requires Fe(2+) as cofactor. Ni(2+) serves as cofactor.

It catalyses the reaction 1,2-dihydroxy-5-(methylsulfanyl)pent-1-en-3-one + O2 = 3-(methylsulfanyl)propanoate + CO + formate + 2 H(+). The enzyme catalyses 1,2-dihydroxy-5-(methylsulfanyl)pent-1-en-3-one + O2 = 4-methylsulfanyl-2-oxobutanoate + formate + 2 H(+). The protein operates within amino-acid biosynthesis; L-methionine biosynthesis via salvage pathway; L-methionine from S-methyl-5-thio-alpha-D-ribose 1-phosphate: step 5/6. Its function is as follows. Catalyzes 2 different reactions between oxygen and the acireductone 1,2-dihydroxy-3-keto-5-methylthiopentene (DHK-MTPene) depending upon the metal bound in the active site. Fe-containing acireductone dioxygenase (Fe-ARD) produces formate and 2-keto-4-methylthiobutyrate (KMTB), the alpha-ketoacid precursor of methionine in the methionine recycle pathway. Ni-containing acireductone dioxygenase (Ni-ARD) produces methylthiopropionate, carbon monoxide and formate, and does not lie on the methionine recycle pathway. This chain is Acireductone dioxygenase, found in Prochlorococcus marinus (strain MIT 9303).